Reading from the N-terminus, the 486-residue chain is UDP-N-acetylmuramate--L-alanine ligase (486 aa).

ATP is bound at residue 129 to 135 (GTHGKTT).

The protein belongs to the MurCDEF family.

The protein localises to the cytoplasm. The enzyme catalyses UDP-N-acetyl-alpha-D-muramate + L-alanine + ATP = UDP-N-acetyl-alpha-D-muramoyl-L-alanine + ADP + phosphate + H(+). It functions in the pathway cell wall biogenesis; peptidoglycan biosynthesis. Its function is as follows. Cell wall formation. The polypeptide is UDP-N-acetylmuramate--L-alanine ligase (Vibrio vulnificus (strain CMCP6)).